The following is a 374-amino-acid chain: Quinolinate synthase (374 aa).

Positions 53 and 70 each coordinate iminosuccinate. Cys-116 provides a ligand contact to [4Fe-4S] cluster. Iminosuccinate is bound by residues 148–150 (YMN) and Ser-169. Position 236 (Cys-236) interacts with [4Fe-4S] cluster. Iminosuccinate contacts are provided by residues 262–264 (HPE) and Thr-279. [4Fe-4S] cluster is bound at residue Cys-327.

It belongs to the quinolinate synthase family. Type 3 subfamily. The cofactor is [4Fe-4S] cluster.

The protein localises to the cytoplasm. It carries out the reaction iminosuccinate + dihydroxyacetone phosphate = quinolinate + phosphate + 2 H2O + H(+). The protein operates within cofactor biosynthesis; NAD(+) biosynthesis; quinolinate from iminoaspartate: step 1/1. Functionally, catalyzes the condensation of iminoaspartate with dihydroxyacetone phosphate to form quinolinate. The polypeptide is Quinolinate synthase (Halobacterium salinarum (strain ATCC 29341 / DSM 671 / R1)).